The following is an 842-amino-acid chain: Protein translocase subunit SecA (842 aa).

ATP-binding positions include Q91, 109-113 (GEGKT), and D498. The segment covering 798-824 (QGQHVSAEDGKEKVKPQPVVKDNHIGR) has biased composition (basic and acidic residues). A disordered region spans residues 798 to 827 (QGQHVSAEDGKEKVKPQPVVKDNHIGRNDP). The Zn(2+) site is built by C828, C830, C839, and C840.

It belongs to the SecA family. Monomer and homodimer. Part of the essential Sec protein translocation apparatus which comprises SecA, SecYEG and auxiliary proteins SecDF. Other proteins may also be involved. Zn(2+) is required as a cofactor.

Its subcellular location is the cell membrane. It is found in the cytoplasm. It catalyses the reaction ATP + H2O + cellular proteinSide 1 = ADP + phosphate + cellular proteinSide 2.. Part of the Sec protein translocase complex. Interacts with the SecYEG preprotein conducting channel. Has a central role in coupling the hydrolysis of ATP to the transfer of proteins into and across the cell membrane, serving as an ATP-driven molecular motor driving the stepwise translocation of polypeptide chains across the membrane. The protein is Protein translocase subunit SecA of Staphylococcus carnosus (strain TM300).